The chain runs to 333 residues: Electron transfer flavoprotein subunit alpha, mitochondrial (333 aa).

The N-terminal 19 residues, 1–19, are a transit peptide targeting the mitochondrion; it reads MFRAAAPGQLRRAASLLRF. The tract at residues 20 to 204 is domain I; the sequence is QSTLVIAEHA…EISEWLDQKL (185 aa). Position 59 is an N6-acetyllysine; alternate (Lys59). Position 59 is an N6-succinyllysine; alternate (Lys59). Lys62 carries the N6-acetyllysine modification. Position 69 is an N6-acetyllysine; alternate (Lys69). Lys69 bears the N6-succinyllysine; alternate mark. At Lys75 the chain carries N6-acetyllysine. Residue Thr93 is modified to Phosphothreonine. Residues Lys101 and Lys139 each carry the N6-acetyllysine modification. At Ser140 the chain carries Phosphoserine. Lys158 carries the post-translational modification N6-acetyllysine; alternate. Lys158 carries the N6-succinyllysine; alternate modification. The residue at position 164 (Lys164) is an N6-acetyllysine. Lys187 is subject to N6-succinyllysine. Lys203 is subject to N6-acetyllysine; alternate. The residue at position 203 (Lys203) is an N6-succinyllysine; alternate. A domain II region spans residues 205-333; the sequence is TKSDRPELTG…PEMTEILKKK (129 aa). Lys216 is modified (N6-succinyllysine). Arg223 provides a ligand contact to FAD. N6-acetyllysine; alternate occurs at positions 226 and 232. Residues Lys226 and Lys232 each carry the N6-succinyllysine; alternate modification. Residues Ser248, 263-266, 281-286, and Asn300 contribute to the FAD site; these read VGQT and SGAIQH. Lys301 bears the N6-succinyllysine mark. 318–319 is a binding site for FAD; the sequence is DL.

Belongs to the ETF alpha-subunit/FixB family. Heterodimer composed of ETFA and ETFB. Identified in a complex that contains ETFA, ETFB and ETFRF1. Interaction with ETFRF1 promotes dissociation of the bound FAD and loss of electron transfer activity. Interacts with TASOR. FAD serves as cofactor.

The protein localises to the mitochondrion matrix. In terms of biological role, heterodimeric electron transfer flavoprotein that accepts electrons from several mitochondrial dehydrogenases, including acyl-CoA dehydrogenases, glutaryl-CoA and sarcosine dehydrogenase. It transfers the electrons to the main mitochondrial respiratory chain via ETF-ubiquinone oxidoreductase (ETF dehydrogenase). Required for normal mitochondrial fatty acid oxidation and normal amino acid metabolism. In Pongo abelii (Sumatran orangutan), this protein is Electron transfer flavoprotein subunit alpha, mitochondrial (ETFA).